The sequence spans 179 residues: Large ribosomal subunit protein uL6c (179 aa).

It belongs to the universal ribosomal protein uL6 family. As to quaternary structure, part of the 50S ribosomal subunit.

The protein localises to the plastid. It is found in the chloroplast. Functionally, binds 23S rRNA. The chain is Large ribosomal subunit protein uL6c (rpl6) from Guillardia theta (Cryptophyte).